The following is a 446-amino-acid chain: Forkhead box protein F2 (446 aa).

The segment covering 1–18 (MSTEGGPPPPPPRPPPAP) has biased composition (pro residues). The interval 1 to 97 (MSTEGGPPPP…TKKATSGLRR (97 aa)) is disordered. Over residues 45–78 (STSSSSSSSSASCASSSSNSVSASAGACKSAASS) the composition is skewed to low complexity. The fork-head DNA-binding region spans 100 to 194 (KPPYSYIALI…EEGSFRRRPR (95 aa)). Disordered stretches follow at residues 257–278 (AGAP…HMSP), 304–325 (GGGG…SPAM), and 340–371 (AHWS…GLHP). The span at 263–274 (AHPHHLHHHHVP) shows a compositional bias: basic residues. Low complexity predominate over residues 311–325 (GPDSSSSPVPSSPAM).

Interacts with the transcription factors TBP and TFIIB. In terms of tissue distribution, uniquely expressed in the bronchiolar epithelium and in type II pneumocytes.

It is found in the nucleus. Functionally, probable transcription activator for a number of lung-specific genes. Mediates up-regulation of the E3 ligase IRF2BPL and drives ubiquitination and degradation of CTNNB1. The chain is Forkhead box protein F2 (Foxf2) from Mus musculus (Mouse).